The chain runs to 1192 residues: MAECSGLQFVSPYAFEAMQKVDVVRLAALSDPELRLLLPCLVRMALCAPADQSQSWAQDKKLILRLLSGVEAVNSIVALLSVDFHALEQDASKEQQLRHKLGGGSGESILVSQLQHGLTLEFEHSDSPRRLRLVLSELLAIMNKVSESNGEFFLKSSELFESPVYLEEAADVLCILQAELPSLLPIVDVAEALLHVKNGAWFLCLLVANVPDSFNEVCRGLIKNGERQDEESVGGRRRTEALRHLCKMNPSQALRVRGMVVEECHLPGLGVALTLDHTKNESSDDGVSDLVCFVSGLLLGTNAKVRTWFGTFIRNGQQRKRDNISSVLWQMRRQLLLELMGILPTVRSTHIVEEADVDTEPNVSVYSGLKEEHVVKASALLRLYCALMGIAGLKPTDEEAEQLLQLMTSRPPATPAGVRFVSLSFCMLLAFSTLVSTPEQEQLMVMWLSWMIKEEAYFESISGVSASFGEMLLLVAMYFHSNQLSAIIDLVCSTLGMKIVIKPSSLSRMKTIFTQEIFTEQVVTAHAVRVPVTGSLSANITGFLPIHCIYQLLRSRSFTKHKVSIKDWIYRQLCETTTPLHPQLLPLIDVYINSILTPASKSNPEATNQPVTEQEILNVFQGLTGGENTRPAQRYSITTQLLVLYYVLSYEEALLANTKILAAMQRKPKSYSSALMDQIPIKYLIRQAQGLQQELGGLHSALLRLLATNYPHLCIVEDWICEEQITGTDALLRRMLLTTIAKNHSPKQLQEAFSMLPGNHTQLMQILEHLTLLSAGELIPYAEVLTSNMNCLLNAGVPRRILQTVNKLWMVLNTVMPRRLWVMTVNALQPSVKIVRQQKYTQNDLMIDPLIVLRCDQRVHRSPPLMDITLHMLNGYLLASKAYLNAHLKETAEQDIRPSQNNAMGPETPEVTREELKNALLAAQDSAAVQILLEICLPTEEEKAQSSSTYSLLKSVQSTTSPKSSDVEEEEDSLLCNLREVQCLICCLLHQMYIADPNIVKLVHFQGYPCELLALTVAGIPSMHICLDFIPELIAQPELEKQIFAIQLLSFLCIQYALPKSLSVARLAINVMGTLLTVLTQSKRYAFFMPTLPCLVSFCQAFPPLYEDIMSLLIQIGQVCASDVATQTRDFDPIITRLQQLKERPNEVSGLCKDSPYKSCSRDITSVDPDVQLCQCVESTIIEIINMSVSGV.

A helical transmembrane segment spans residues Phe420 to Ser436.

It belongs to the Integrator subunit 2 family. Component of the Integrator complex, composed of core subunits INTS1, INTS2, INTS3, INTS4, INTS5, INTS6, INTS7, INTS8, INTS9/RC74, INTS10, INTS11/CPSF3L, INTS12, INTS13, INTS14 and INTS15. The core complex associates with protein phosphatase 2A subunits PPP2CA and PPP2R1A, to form the Integrator-PP2A (INTAC) complex.

Its subcellular location is the nucleus. The protein resides in the nucleus membrane. It is found in the cytoplasm. Functionally, component of the integrator complex, a multiprotein complex that terminates RNA polymerase II (Pol II) transcription in the promoter-proximal region of genes. The integrator complex provides a quality checkpoint during transcription elongation by driving premature transcription termination of transcripts that are unfavorably configured for transcriptional elongation: the complex terminates transcription by (1) catalyzing dephosphorylation of the C-terminal domain (CTD) of Pol II subunit POLR2A/RPB1 and SUPT5H/SPT5, (2) degrading the exiting nascent RNA transcript via endonuclease activity and (3) promoting the release of Pol II from bound DNA. The integrator complex is also involved in terminating the synthesis of non-coding Pol II transcripts, such as enhancer RNAs (eRNAs), small nuclear RNAs (snRNAs), telomerase RNAs and long non-coding RNAs (lncRNAs). The protein is Integrator complex subunit 2 (INTS2) of Gallus gallus (Chicken).